We begin with the raw amino-acid sequence, 502 residues long: uncharacterized protein (502 aa).

The helical transmembrane segment at 1–21 (MKIFLVFLSVFFFNGCFGLVY) threads the bilayer. PLD phosphodiesterase domains follow at residues 162 to 189 (IKKR…GDNY) and 396 to 423 (TKHS…DPRS).

This sequence belongs to the phospholipase D family. Cardiolipin synthase subfamily.

It localises to the cell membrane. This is an uncharacterized protein from Helicobacter pylori (strain ATCC 700392 / 26695) (Campylobacter pylori).